The sequence spans 223 residues: N-terminal Xaa-Pro-Lys N-methyltransferase 1 (223 aa).

M1 carries the N-acetylmethionine modification. An N-acetylthreonine; in N-terminal Xaa-Pro-Lys N-methyltransferase 1, N-terminally processed modification is found at T2. Residues G69, R74, 91–93, 119–120, and Q135 each bind S-adenosyl-L-methionine; these read DIT and LQ.

It belongs to the methyltransferase superfamily. NTM1 family.

It localises to the nucleus. The enzyme catalyses N-terminal L-alanyl-L-prolyl-L-lysyl-[protein] + 3 S-adenosyl-L-methionine = N-terminal N,N,N-trimethyl-L-alanyl-L-prolyl-L-lysyl-[protein] + 3 S-adenosyl-L-homocysteine + 3 H(+). It carries out the reaction N-terminal L-seryl-L-prolyl-L-lysyl-[protein] + 3 S-adenosyl-L-methionine = N-terminal N,N,N-trimethyl-L-seryl-L-prolyl-L-lysyl-[protein] + 3 S-adenosyl-L-homocysteine + 3 H(+). The catalysed reaction is N-terminal L-prolyl-L-prolyl-L-lysyl-[protein] + 2 S-adenosyl-L-methionine = N-terminal N,N-dimethyl-L-prolyl-L-prolyl-L-lysyl-[protein] + 2 S-adenosyl-L-homocysteine + 2 H(+). Functionally, distributive alpha-N-methyltransferase that methylates the N-terminus of target proteins containing the N-terminal motif [Ala/Gly/Pro/Ser]-Pro-Lys when the initiator Met is cleaved. Specifically catalyzes mono-, di- or tri-methylation of the exposed alpha-amino group of the Ala, Gly or Ser residue in the [Ala/Gly/Ser]-Pro-Lys motif and mono- or di-methylation of Pro in the Pro-Pro-Lys motif. Some of the substrates may be primed by NTMT2-mediated monomethylation. Catalyzes the trimethylation of the N-terminal Gly in CENPA (after removal of Met-1). Responsible for the N-terminal methylation of KLHL31, MYL2, MYL3, RB1, RCC1, RPL23A and SET. Required during mitosis for normal bipolar spindle formation and chromosome segregation via its action on RCC1. The chain is N-terminal Xaa-Pro-Lys N-methyltransferase 1 (NTMT1) from Homo sapiens (Human).